The primary structure comprises 172 residues: Antibacterial protein PR-39 (172 aa).

Positions 1–29 (METQRASLCLGRWSLWLLLLGLVVPSASA) are cleaved as a signal peptide. The residue at position 30 (Q30) is a Pyrrolidone carboxylic acid. The propeptide occupies 30-130 (QALSYREAVL…DISCNEIQSV (101 aa)). The interval 61–80 (DQPPKADEDPGTPKPVSFTV) is disordered. 2 cysteine pairs are disulfide-bonded: C85-C96 and C107-C124. Positions 130–172 (VRRRPRPPYLPRPRPPPFFPPRLPPRIPPGFPPRFPPRFPGKR) are disordered. Over residues 136–172 (PPYLPRPRPPPFFPPRLPPRIPPGFPPRFPPRFPGKR) the composition is skewed to pro residues. The residue at position 169 (P169) is a Proline amide.

Belongs to the cathelicidin family. Small intestine and bone marrow.

Its subcellular location is the secreted. Its function is as follows. Exerts a potent antimicrobial activity against both E.coli and B.megaterium. The chain is Antibacterial protein PR-39 (PR39) from Sus scrofa (Pig).